Reading from the N-terminus, the 84-residue chain is Small ribosomal subunit protein uS17 (84 aa).

This sequence belongs to the universal ribosomal protein uS17 family. In terms of assembly, part of the 30S ribosomal subunit.

In terms of biological role, one of the primary rRNA binding proteins, it binds specifically to the 5'-end of 16S ribosomal RNA. This is Small ribosomal subunit protein uS17 from Clostridium novyi (strain NT).